The chain runs to 226 residues: Orotidine 5'-phosphate decarboxylase (226 aa).

Residues Asp8, Lys30, 58–67 (DLKLYDIPNT), Thr117, Arg177, Gln186, Gly206, and Arg207 contribute to the substrate site. Lys60 functions as the Proton donor in the catalytic mechanism.

This sequence belongs to the OMP decarboxylase family. Type 1 subfamily. As to quaternary structure, homodimer.

It catalyses the reaction orotidine 5'-phosphate + H(+) = UMP + CO2. It functions in the pathway pyrimidine metabolism; UMP biosynthesis via de novo pathway; UMP from orotate: step 2/2. Functionally, catalyzes the decarboxylation of orotidine 5'-monophosphate (OMP) to uridine 5'-monophosphate (UMP). This Campylobacter concisus (strain 13826) protein is Orotidine 5'-phosphate decarboxylase.